Here is a 120-residue protein sequence, read N- to C-terminus: uncharacterized protein (120 aa).

This is an uncharacterized protein from Saccharomyces cerevisiae (strain ATCC 204508 / S288c) (Baker's yeast).